The primary structure comprises 428 residues: MFVDQVKIYVKGGDGGNGMVAFRREKYVPKGGPAGGDGGKGGDVVFKVDEGLSTLMDFRYQRHFKAARGEHGMSKNQHGRNAEDMVVKVPPGTVVIDDDTKQVIADLTEHGQEAVIAKGGRGGRGNTRFATPANPAPQLSENGEPGKERYIVLELKVLADVGLVGFPSVGKSTLLSVVSSAKPKIADYHFTTLNPNLGMVETEDGRSFVMADLPGLIEGAHEGVGLGHQFLRHIERTRVIVHVIDMSGLEGRDPYEDYVTINKELEQYNLRLTERPQIIVANKMDMPDAEENLKAFKEKLTDDYPVFPISAVTRQGLRDLLFEIADRLETTPEFPLYDEEDMAENRVMYKLEDEEAPFEISRDPDGTFVLSGAKLERLFKMTDFSRDESVKRFARQLRGMGVDDALRARGAKDGDTIRLLEFEFEFID.

Residues 1-158 (MFVDQVKIYV…RYIVLELKVL (158 aa)) form the Obg domain. The tract at residues 118-143 (KGGRGGRGNTRFATPANPAPQLSENG) is disordered. In terms of domain architecture, OBG-type G spans 159-329 (ADVGLVGFPS…LLFEIADRLE (171 aa)). Residues 165 to 172 (GFPSVGKS), 190 to 194 (FTTLN), 212 to 215 (DLPG), 282 to 285 (NKMD), and 310 to 312 (SAV) contribute to the GTP site. Residues S172 and T192 each contribute to the Mg(2+) site. One can recognise an OCT domain in the interval 350–428 (KLEDEEAPFE…LLEFEFEFID (79 aa)).

It belongs to the TRAFAC class OBG-HflX-like GTPase superfamily. OBG GTPase family. As to quaternary structure, monomer. Mg(2+) serves as cofactor.

The protein localises to the cytoplasm. An essential GTPase which binds GTP, GDP and possibly (p)ppGpp with moderate affinity, with high nucleotide exchange rates and a fairly low GTP hydrolysis rate. Plays a role in control of the cell cycle, stress response, ribosome biogenesis and in those bacteria that undergo differentiation, in morphogenesis control. The sequence is that of GTPase Obg from Bacillus licheniformis (strain ATCC 14580 / DSM 13 / JCM 2505 / CCUG 7422 / NBRC 12200 / NCIMB 9375 / NCTC 10341 / NRRL NRS-1264 / Gibson 46).